A 149-amino-acid polypeptide reads, in one-letter code: Thioredoxin-like protein 4B (149 aa).

The protein belongs to the DIM1 family. Homodimer. Interacts with the U5-102 kDa protein subunit of the spliceosome.

It localises to the nucleus. In terms of biological role, essential role in pre-mRNA splicing. Required in cell cycle progression for S/G(2) transition. This Mus musculus (Mouse) protein is Thioredoxin-like protein 4B (Txnl4b).